Here is an 83-residue protein sequence, read N- to C-terminus: Small ribosomal subunit protein uS17 (83 aa).

Belongs to the universal ribosomal protein uS17 family. In terms of assembly, part of the 30S ribosomal subunit.

One of the primary rRNA binding proteins, it binds specifically to the 5'-end of 16S ribosomal RNA. The polypeptide is Small ribosomal subunit protein uS17 (Campylobacter concisus (strain 13826)).